A 217-amino-acid chain; its full sequence is MMAAGPRTSLLLAFALLCLPWTQMVGAFPAMSLSGLFANAVLRAQHLHQLAADTFKEFERTYIPEGQRYSIQNTQVAFCFSETIPAPTGKNEAQQKSDLELLRISLLLIQSWLGPLQFLSRVFSNSLVFGTSDRVYEKLKDLEEGILALMRELEDGTPRAGQILKQTYDKFDTNMRSDDALLKNYGLLSCFRKDLHKTETYLRVMKCRRFGEASCAF.

Residues 1 to 27 (MMAAGPRTSLLLAFALLCLPWTQMVGA) form the signal peptide. Residue H46 coordinates Zn(2+). C79 and C190 are disulfide-bonded. The residue at position 132 (S132) is a Phosphoserine. E199 lines the Zn(2+) pocket. A disulfide bridge connects residues C207 and C215.

It belongs to the somatotropin/prolactin family.

It is found in the secreted. Plays an important role in growth control. Its major role in stimulating body growth is to stimulate the liver and other tissues to secrete IGF1. It stimulates both the differentiation and proliferation of myoblasts. It also stimulates amino acid uptake and protein synthesis in muscle and other tissues. The protein is Somatotropin (GH1) of Giraffa camelopardalis (Giraffe).